Reading from the N-terminus, the 341-residue chain is Gibberellin 2-beta-dioxygenase 2 (341 aa).

The Fe2OG dioxygenase domain occupies 179 to 283 (KSDSCLRLNH…RISMIYFGGP (105 aa)). 3 residues coordinate Fe cation: His-207, Asp-209, and His-264. Residue Arg-274 is part of the active site. Arg-274 contributes to the 2-oxoglutarate binding site.

The protein belongs to the iron/ascorbate-dependent oxidoreductase family. GA2OX subfamily. Fe(2+) is required as a cofactor. As to expression, preferentially expressed in flowers, siliques, and upper stems. Expressed in cotyledons, at the base of the shoot apical meristem and developing leaf primordia.

The catalysed reaction is gibberellin A1 + 2-oxoglutarate + O2 = gibberellin A8 + succinate + CO2. It participates in plant hormone biosynthesis; gibberellin biosynthesis. Its function is as follows. Catalyzes the 2-beta-hydroxylation of several biologically active gibberellins, leading to the homeostatic regulation of their endogenous level. Catabolism of gibberellins (GAs) plays a central role in plant development. Converts GA9/GA20 to GA51/GA29 and GA4/GA1 to GA34/GA8. The polypeptide is Gibberellin 2-beta-dioxygenase 2 (GA2OX2) (Arabidopsis thaliana (Mouse-ear cress)).